We begin with the raw amino-acid sequence, 196 residues long: dTTP/UTP pyrophosphatase (196 aa).

The active-site Proton acceptor is the Asp-78.

It belongs to the Maf family. YhdE subfamily. The cofactor is a divalent metal cation.

The protein resides in the cytoplasm. It carries out the reaction dTTP + H2O = dTMP + diphosphate + H(+). It catalyses the reaction UTP + H2O = UMP + diphosphate + H(+). Functionally, nucleoside triphosphate pyrophosphatase that hydrolyzes dTTP and UTP. May have a dual role in cell division arrest and in preventing the incorporation of modified nucleotides into cellular nucleic acids. The polypeptide is dTTP/UTP pyrophosphatase (Photobacterium profundum (strain SS9)).